A 498-amino-acid polypeptide reads, in one-letter code: Probable cytosol aminopeptidase (498 aa).

The Mn(2+) site is built by Lys-269 and Asp-274. Lys-281 is a catalytic residue. Residues Asp-292, Asp-351, and Glu-353 each coordinate Mn(2+). Arg-355 is a catalytic residue.

Belongs to the peptidase M17 family. Mn(2+) is required as a cofactor.

It localises to the cytoplasm. The enzyme catalyses Release of an N-terminal amino acid, Xaa-|-Yaa-, in which Xaa is preferably Leu, but may be other amino acids including Pro although not Arg or Lys, and Yaa may be Pro. Amino acid amides and methyl esters are also readily hydrolyzed, but rates on arylamides are exceedingly low.. It carries out the reaction Release of an N-terminal amino acid, preferentially leucine, but not glutamic or aspartic acids.. Presumably involved in the processing and regular turnover of intracellular proteins. Catalyzes the removal of unsubstituted N-terminal amino acids from various peptides. The sequence is that of Probable cytosol aminopeptidase from Glaesserella parasuis serovar 5 (strain SH0165) (Haemophilus parasuis).